The following is a 576-amino-acid chain: MNIKNILLKNVKNALKPSNLDLRNLKIKKTKFKKFGNYQIDGIFSILNKNKINLNELLNKILPIINMKLINVSEKIEFVKPGYINIFLKKSWIEDNLLKIYHSNKLGISKLKKKTIIIDYSSPNIGKEMHVGHMRSTIIGDSISLILELLGHKVIRANHIGDWGNQFGMLLAYFNEKQNLKFSEITCTDLENYYINAKKKYDKDLEFKKKSQFFTLKLQKKEKDCINIWKKITNLSIENNQKIYDQLNIKLNKTHIMGESLYNDFVPYIISDLPKKNLAINKSGNIMVILNNFKNKQGKSMGVILKKRNGTYLYSVIDIACIKYRYDFFKAQKIIYYTDSRQSQHLLQVFDIVRKAKYIPNFVKLEHHKFGMVLKKDKTPFKTRSGDTIKLSDLLKKSKEKAKKLIIKKNPNTSIDEIESLSQAIGIGSIKYFELSKNRETDYIFNWDNILSFNGNTAPYIQYAYTRVISLIKKNKLKNKNNVKFLLKKEEEIDLSICLLQFEEIINDVSKLGTPHILCNYLYDLSKTFSVFYENCSIIKTKEESVKNSRLFLSILTSRTLKVGLELLGIPMVEKM.

The 'HIGH' region signature appears at 123-133; that stretch reads PNIGKEMHVGH.

This sequence belongs to the class-I aminoacyl-tRNA synthetase family. In terms of assembly, monomer.

Its subcellular location is the cytoplasm. It catalyses the reaction tRNA(Arg) + L-arginine + ATP = L-arginyl-tRNA(Arg) + AMP + diphosphate. The protein is Arginine--tRNA ligase of Wigglesworthia glossinidia brevipalpis.